Here is a 400-residue protein sequence, read N- to C-terminus: MKNIDEQIKIIKKGAEEIIDAKELKEKLIKAEKENTQLVVKLGLDPSAPDIHLGHAVVLRKLKQLQDLGHKIVIIIGDFTGMIGDPTGKSKTRKQLSSQQVMKNAETYEKQIFKILDRNKTDLRFNSQWLEKLNFKEVIELASKYTVARMLEREDFKKRFKNQQSIGIHEFFYPLMQAYDSMAIKADIEFGGTDQRFNLLMGRTLQAEYGEEKQIAIFMPLLEGIDGKEKMSKSLGNYIGIEESAKDMYVKVMQIPDSLIIKYFELCTDMHPDAIDIIRKQLNEDKVNPRDIKMKLAKEIVCLYHNEAEALNAEIYFKNLFQDKEIPEDIPIFKVRSENNLIEAIVKINSNTSKSEARRLIAQGGVKLNGRKVIDFNDIILKSNDVIQIGKKKIVKLLVE.

Positions 46-55 (PSAPDIHLGH) match the 'HIGH' region motif. A 'KMSKS' region motif is present at residues 230–234 (KMSKS). Lysine 233 is an ATP binding site. One can recognise an S4 RNA-binding domain in the interval 339–399 (NNLIEAIVKI…GKKKIVKLLV (61 aa)).

This sequence belongs to the class-I aminoacyl-tRNA synthetase family. TyrS type 2 subfamily. As to quaternary structure, homodimer.

It is found in the cytoplasm. The catalysed reaction is tRNA(Tyr) + L-tyrosine + ATP = L-tyrosyl-tRNA(Tyr) + AMP + diphosphate + H(+). Catalyzes the attachment of tyrosine to tRNA(Tyr) in a two-step reaction: tyrosine is first activated by ATP to form Tyr-AMP and then transferred to the acceptor end of tRNA(Tyr). In Clostridium acetobutylicum (strain ATCC 824 / DSM 792 / JCM 1419 / IAM 19013 / LMG 5710 / NBRC 13948 / NRRL B-527 / VKM B-1787 / 2291 / W), this protein is Tyrosine--tRNA ligase 2.